Consider the following 36-residue polypeptide: Photosystem I reaction center subunit VIII (36 aa).

The helical transmembrane segment at 10 to 29 (FVPLVGLVFPAIAMASLFLY) threads the bilayer.

The protein belongs to the PsaI family.

The protein resides in the plastid. Its subcellular location is the chloroplast thylakoid membrane. Its function is as follows. May help in the organization of the PsaL subunit. The protein is Photosystem I reaction center subunit VIII of Oryza nivara (Indian wild rice).